A 207-amino-acid polypeptide reads, in one-letter code: Protein dct-5 (207 aa).

A helical membrane pass occupies residues 13–33; that stretch reads LNFILSIMNSYLFVLIVSIGF.

It localises to the membrane. In terms of biological role, acts downstream of daf-16/foxo to suppress tumors induced by disruption of gld-1. Potentially a direct target of daf-15/foxo. This chain is Protein dct-5 (dct-5), found in Caenorhabditis elegans.